The primary structure comprises 416 residues: Exodeoxyribonuclease 7 large subunit (416 aa).

This sequence belongs to the XseA family. Heterooligomer composed of large and small subunits.

It is found in the cytoplasm. The enzyme catalyses Exonucleolytic cleavage in either 5'- to 3'- or 3'- to 5'-direction to yield nucleoside 5'-phosphates.. Functionally, bidirectionally degrades single-stranded DNA into large acid-insoluble oligonucleotides, which are then degraded further into small acid-soluble oligonucleotides. The protein is Exodeoxyribonuclease 7 large subunit of Nitratiruptor sp. (strain SB155-2).